Reading from the N-terminus, the 328-residue chain is Thiamine thiazole synthase (328 aa).

Residues Ala-87, 108–109 (EA), Gly-116, and Val-181 each bind substrate. Cys-215 carries the post-translational modification 2,3-didehydroalanine (Cys). Substrate contacts are provided by residues Asp-217, His-232, Met-284, and 294 to 296 (RMG).

This sequence belongs to the THI4 family. Homooctamer. Fe cation is required as a cofactor. During the catalytic reaction, a sulfide is transferred from Cys-215 to a reaction intermediate, generating a dehydroalanine residue.

Its subcellular location is the cytoplasm. The protein localises to the nucleus. It carries out the reaction [ADP-thiazole synthase]-L-cysteine + glycine + NAD(+) = [ADP-thiazole synthase]-dehydroalanine + ADP-5-ethyl-4-methylthiazole-2-carboxylate + nicotinamide + 3 H2O + 2 H(+). In terms of biological role, involved in biosynthesis of the thiamine precursor thiazole. Catalyzes the conversion of NAD and glycine to adenosine diphosphate 5-(2-hydroxyethyl)-4-methylthiazole-2-carboxylic acid (ADT), an adenylated thiazole intermediate. The reaction includes an iron-dependent sulfide transfer from a conserved cysteine residue of the protein to a thiazole intermediate. The enzyme can only undergo a single turnover, which suggests it is a suicide enzyme. May have additional roles in adaptation to various stress conditions and in DNA damage tolerance. The chain is Thiamine thiazole synthase (thi2) from Schizosaccharomyces pombe (strain 972 / ATCC 24843) (Fission yeast).